Reading from the N-terminus, the 355-residue chain is Uroporphyrinogen decarboxylase (355 aa).

Substrate contacts are provided by residues 27–31 (RQAGR), Asp77, Tyr154, Thr209, and His328.

The protein belongs to the uroporphyrinogen decarboxylase family. Homodimer.

It localises to the cytoplasm. The catalysed reaction is uroporphyrinogen III + 4 H(+) = coproporphyrinogen III + 4 CO2. It participates in porphyrin-containing compound metabolism; protoporphyrin-IX biosynthesis; coproporphyrinogen-III from 5-aminolevulinate: step 4/4. In terms of biological role, catalyzes the decarboxylation of four acetate groups of uroporphyrinogen-III to yield coproporphyrinogen-III. This chain is Uroporphyrinogen decarboxylase, found in Photobacterium profundum (strain SS9).